A 194-amino-acid polypeptide reads, in one-letter code: Protein GrpE (194 aa).

Residues 1-12 (MSSKEQNTPNEQ) show a composition bias toward polar residues. A disordered region spans residues 1-39 (MSSKEQNTPNEQASDEIETEQAKNQGADTAAEAADQRDE).

This sequence belongs to the GrpE family. As to quaternary structure, homodimer.

It is found in the cytoplasm. In terms of biological role, participates actively in the response to hyperosmotic and heat shock by preventing the aggregation of stress-denatured proteins, in association with DnaK and GrpE. It is the nucleotide exchange factor for DnaK and may function as a thermosensor. Unfolded proteins bind initially to DnaJ; upon interaction with the DnaJ-bound protein, DnaK hydrolyzes its bound ATP, resulting in the formation of a stable complex. GrpE releases ADP from DnaK; ATP binding to DnaK triggers the release of the substrate protein, thus completing the reaction cycle. Several rounds of ATP-dependent interactions between DnaJ, DnaK and GrpE are required for fully efficient folding. The sequence is that of Protein GrpE from Erwinia tasmaniensis (strain DSM 17950 / CFBP 7177 / CIP 109463 / NCPPB 4357 / Et1/99).